Consider the following 273-residue polypeptide: Proteasome subunit beta type-10 (273 aa).

Residue Met1 is modified to N-acetylmethionine. Positions 1–39 are cleaved as a propeptide — removed in mature form; it reads MLKPALEPRGGFSFENCQRNASLERVLPGLKVPHARKTG. The active-site Nucleophile is Thr40. The residue at position 230 (Ser230) is a Phosphoserine.

It belongs to the peptidase T1B family. As to quaternary structure, the 26S proteasome consists of a 20S proteasome core and two 19S regulatory subunits. The 20S proteasome core is composed of 28 subunits that are arranged in four stacked rings, resulting in a barrel-shaped structure. The two end rings are each formed by seven alpha subunits, and the two central rings are each formed by seven beta subunits. The catalytic chamber with the active sites is on the inside of the barrel. Component of the immunoproteasome, where it displaces the equivalent housekeeping subunit PSMB7. Component of the spermatoproteasome, a form of the proteasome specifically found in testis. In terms of assembly, (Microbial infection) Interacts with HIV-1 TAT protein. Post-translationally, autocleaved. The resulting N-terminal Thr residue of the mature subunit is responsible for the nucleophile proteolytic activity.

Its subcellular location is the cytoplasm. The protein resides in the nucleus. It catalyses the reaction Cleavage of peptide bonds with very broad specificity.. Functionally, the proteasome is a multicatalytic proteinase complex which is characterized by its ability to cleave peptides with Arg, Phe, Tyr, Leu, and Glu adjacent to the leaving group at neutral or slightly basic pH. The proteasome has an ATP-dependent proteolytic activity. This subunit is involved in antigen processing to generate class I binding peptides. In Homo sapiens (Human), this protein is Proteasome subunit beta type-10 (PSMB10).